The primary structure comprises 442 residues: Tubulin beta chain (442 aa).

Gln-11, Glu-69, Ser-138, Gly-142, Thr-143, Gly-144, Asn-204, and Asn-226 together coordinate GTP. Glu-69 is a Mg(2+) binding site.

The protein belongs to the tubulin family. As to quaternary structure, dimer of alpha and beta chains. A typical microtubule is a hollow water-filled tube with an outer diameter of 25 nm and an inner diameter of 15 nM. Alpha-beta heterodimers associate head-to-tail to form protofilaments running lengthwise along the microtubule wall with the beta-tubulin subunit facing the microtubule plus end conferring a structural polarity. Microtubules usually have 13 protofilaments but different protofilament numbers can be found in some organisms and specialized cells. The cofactor is Mg(2+).

It is found in the cytoplasm. The protein localises to the cytoskeleton. Its function is as follows. Tubulin is the major constituent of microtubules, a cylinder consisting of laterally associated linear protofilaments composed of alpha- and beta-tubulin heterodimers. Microtubules grow by the addition of GTP-tubulin dimers to the microtubule end, where a stabilizing cap forms. Below the cap, tubulin dimers are in GDP-bound state, owing to GTPase activity of alpha-tubulin. The sequence is that of Tubulin beta chain from Trypanosoma cruzi.